A 1610-amino-acid polypeptide reads, in one-letter code: NHS-like protein 1 (1610 aa).

The residue at position 24 (S24) is a Phosphoserine. The tract at residues 145-169 (SPFCDDYQDEDEETDQKCSLSSSEE) is disordered. Residues S198 and S328 each carry the phosphoserine modification. Residues 433–448 (TAQSAGQRESKSSGSS) show a composition bias toward polar residues. Disordered regions lie at residues 433 to 477 (TAQS…HWNE) and 531 to 602 (PAHP…DAGS). Residue S568 is modified to Phosphoserine. Residues 578–594 (GYSTPTSNMSSCSLDQT) show a composition bias toward polar residues. S639 is modified (phosphoserine). Positions 649–667 (QKNQGDRSNYQDKSLSRNI) are enriched in polar residues. Disordered stretches follow at residues 649–693 (QKNQ…KKSS), 715–778 (SLPG…SVKS), 791–981 (TGMQ…PPPE), 997–1535 (PRPA…GEGE), and 1566–1610 (EGGL…SEES). Residues 715 to 730 (SLPGKSGSSPSQSPCS) are compositionally biased toward low complexity. Polar residues-rich tracts occupy residues 740 to 760 (SRSQSTVSAGSSMTSATTPNV), 767 to 778 (TPSQSDTSSVKS), and 851 to 865 (SPSSGYSSQSNTPTA). The span at 895 to 928 (SLISSVSISSSSTSLSSSTSTEGSGTMKKLDPAV) shows a compositional bias: low complexity. Pro residues-rich tracts occupy residues 929–946 (GSPPAPPPPPVPSPPFPC) and 970–981 (PHSPVFPPPPPE). Positions 1001–1011 (LSPILPDSPVS) are enriched in low complexity. A compositionally biased stretch (pro residues) spans 1012–1031 (LPLPPPLLPSSEPPPAPPLD). The span at 1041–1053 (PFTNSGQPESSRG) shows a compositional bias: polar residues. The residue at position 1089 (S1089) is a Phosphoserine. Over residues 1122-1153 (SRNSTNEMESESQPASVTSSLPTPAKSSSQGD) the composition is skewed to polar residues. S1167 carries the phosphoserine modification. Positions 1180–1193 (PSPSTTPLPDSSPS) are enriched in low complexity. S1233 bears the Phosphoserine mark. 2 stretches are compositionally biased toward basic and acidic residues: residues 1240-1249 (GSVHSREAKE) and 1373-1383 (GRRDSDDDHSR). 2 positions are modified to phosphoserine: S1386 and S1388. T1392 bears the Phosphothreonine mark. Polar residues predominate over residues 1405-1422 (QVGSIQRSIRKSSTSSDN). Positions 1447–1460 (KNTDPRFQRSRSEP) are enriched in basic and acidic residues. Composition is skewed to low complexity over residues 1461–1474 (SPDAPESPSSCSPS) and 1504–1516 (SRTPPSAASSRYS).

This sequence belongs to the NHS family. Widely expressed. Expressed in adult and fetal brain, fetal eyes, adult lens, kidney, liver and intestine.

This is NHS-like protein 1 (NHSL1) from Homo sapiens (Human).